The chain runs to 116 residues: Large ribosomal subunit protein bL20 (116 aa).

This sequence belongs to the bacterial ribosomal protein bL20 family.

In terms of biological role, binds directly to 23S ribosomal RNA and is necessary for the in vitro assembly process of the 50S ribosomal subunit. It is not involved in the protein synthesizing functions of that subunit. In Hydrogenobaculum sp. (strain Y04AAS1), this protein is Large ribosomal subunit protein bL20.